The primary structure comprises 273 residues: BTB and MATH domain-containing protein 15 (273 aa).

One can recognise an MATH domain in the interval 7-123 (EFVFHHTFKD…DNSFTIEACV (117 aa)). Residues 147-206 (SDVILVVGDEKFYVLKLFLASHSSYFNALFLGKFKEADQSEVTLQNIDPTDFQSLLEVLY) form the BTB domain.

As to quaternary structure, interacts with cul-3.

The protein operates within protein modification; protein ubiquitination. Probable substrate-specific adapter of an E3 ubiquitin-protein ligase complex which mediates the ubiquitination and subsequent proteasomal degradation of target proteins. The protein is BTB and MATH domain-containing protein 15 (bath-15) of Caenorhabditis elegans.